Here is a 682-residue protein sequence, read N- to C-terminus: tRNA(Met) cytidine acetyltransferase TmcA (682 aa).

ATP is bound by residues Q176, 198 to 207, and R320; that span reads GRGKSTLAGM. The N-acetyltransferase domain maps to 357–534; that stretch reads QQQWIQQPEL…SGCYTAMAIF (178 aa). Acetyl-CoA-binding positions include 462-464 and E502; that span reads VAV.

Belongs to the RNA cytidine acetyltransferase family. TmcA subfamily.

It is found in the cytoplasm. It catalyses the reaction cytidine(34) in elongator tRNA(Met) + acetyl-CoA + ATP + H2O = N(4)-acetylcytidine(34) in elongator tRNA(Met) + ADP + phosphate + CoA + H(+). Its function is as follows. Catalyzes the formation of N(4)-acetylcytidine (ac(4)C) at the wobble position of tRNA(Met), by using acetyl-CoA as an acetyl donor and ATP (or GTP). The chain is tRNA(Met) cytidine acetyltransferase TmcA from Photorhabdus asymbiotica subsp. asymbiotica (strain ATCC 43949 / 3105-77) (Xenorhabdus luminescens (strain 2)).